Reading from the N-terminus, the 342-residue chain is Type II restriction enzyme CviAII (342 aa).

It catalyses the reaction Endonucleolytic cleavage of DNA to give specific double-stranded fragments with terminal 5'-phosphates.. Functionally, a P subtype restriction enzyme that recognizes the double-stranded sequence 5'-CATG-3' and cleaves after C-1. The polypeptide is Type II restriction enzyme CviAII (CVIAIIR) (Chlorella (PBCV-1)).